A 314-amino-acid polypeptide reads, in one-letter code: tRNA dimethylallyltransferase (314 aa).

ATP is bound at residue 13 to 20 (GPTAIGKT). 15 to 20 (TAIGKT) contacts substrate. Residues 38-41 (DSMQ) form an interaction with substrate tRNA region.

This sequence belongs to the IPP transferase family. In terms of assembly, monomer. Requires Mg(2+) as cofactor.

The enzyme catalyses adenosine(37) in tRNA + dimethylallyl diphosphate = N(6)-dimethylallyladenosine(37) in tRNA + diphosphate. Its function is as follows. Catalyzes the transfer of a dimethylallyl group onto the adenine at position 37 in tRNAs that read codons beginning with uridine, leading to the formation of N6-(dimethylallyl)adenosine (i(6)A). This Desulfotalea psychrophila (strain LSv54 / DSM 12343) protein is tRNA dimethylallyltransferase.